The chain runs to 214 residues: Large ribosomal subunit protein uL3 (214 aa).

Residues 131-153 (KSQRASHGNSRSHNVPGSIGMAQ) form a disordered region. Residues 132 to 145 (SQRASHGNSRSHNV) are compositionally biased toward polar residues. Glutamine 153 carries the post-translational modification N5-methylglutamine.

It belongs to the universal ribosomal protein uL3 family. In terms of assembly, part of the 50S ribosomal subunit. Forms a cluster with proteins L14 and L19. Post-translationally, methylated by PrmB.

One of the primary rRNA binding proteins, it binds directly near the 3'-end of the 23S rRNA, where it nucleates assembly of the 50S subunit. The polypeptide is Large ribosomal subunit protein uL3 (Thiobacillus denitrificans (strain ATCC 25259 / T1)).